A 377-amino-acid chain; its full sequence is Ribosomal RNA large subunit methyltransferase G (377 aa).

It belongs to the methyltransferase superfamily. RlmG family.

The protein resides in the cytoplasm. It catalyses the reaction guanosine(1835) in 23S rRNA + S-adenosyl-L-methionine = N(2)-methylguanosine(1835) in 23S rRNA + S-adenosyl-L-homocysteine + H(+). Functionally, specifically methylates the guanine in position 1835 (m2G1835) of 23S rRNA. This Shewanella sp. (strain MR-4) protein is Ribosomal RNA large subunit methyltransferase G.